Consider the following 102-residue polypeptide: Small ribosomal subunit protein uS10 (102 aa).

Belongs to the universal ribosomal protein uS10 family. Part of the 30S ribosomal subunit.

In terms of biological role, involved in the binding of tRNA to the ribosomes. In Carboxydothermus hydrogenoformans (strain ATCC BAA-161 / DSM 6008 / Z-2901), this protein is Small ribosomal subunit protein uS10.